Consider the following 285-residue polypeptide: Energy-coupling factor transporter ATP-binding protein EcfA2 (285 aa).

In terms of domain architecture, ABC transporter spans 6–242 (LKVEELNYNY…KEVIRKVNLR (237 aa)). 39–46 (GGNGVGKS) provides a ligand contact to ATP.

It belongs to the ABC transporter superfamily. Energy-coupling factor EcfA family. As to quaternary structure, forms a stable energy-coupling factor (ECF) transporter complex composed of 2 membrane-embedded substrate-binding proteins (S component), 2 ATP-binding proteins (A component) and 2 transmembrane proteins (T component).

The protein resides in the cell membrane. In terms of biological role, ATP-binding (A) component of a common energy-coupling factor (ECF) ABC-transporter complex. Unlike classic ABC transporters this ECF transporter provides the energy necessary to transport a number of different substrates. The sequence is that of Energy-coupling factor transporter ATP-binding protein EcfA2 from Clostridium perfringens (strain SM101 / Type A).